The primary structure comprises 347 residues: Protein O-mannose kinase (347 aa).

Residues 1 to 14 (MGGTAVGGVIGVRC) lie on the Cytoplasmic side of the membrane. The helical; Signal-anchor for type II membrane protein transmembrane segment at 15 to 35 (GVPAVLLCLGALLCANVLLYF) threads the bilayer. The Lumenal segment spans residues 36–347 (YLDALYQNTN…SQSQRVRDML (312 aa)). Residues 79 to 347 (VRRVKLIGQG…SQSQRVRDML (269 aa)) form the Protein kinase domain.

This sequence belongs to the protein kinase superfamily. Ser/Thr protein kinase family. STKL subfamily.

The protein localises to the endoplasmic reticulum membrane. It carries out the reaction 3-O-[beta-D-GalNAc-(1-&gt;3)-beta-D-GlcNAc-(1-&gt;4)-alpha-D-Man]-L-Thr-[protein] + ATP = 3-O-[beta-D-GalNAc-(1-&gt;3)-beta-D-GlcNAc-(1-&gt;4)-(O-6-P-alpha-D-Man)]-Thr-[protein] + ADP + H(+). Functionally, protein O-mannose kinase that specifically mediates phosphorylation at the 6-position of an O-mannose of the trisaccharide (N-acetylgalactosamine (GalNAc)-beta-1,3-N-acetylglucosamine (GlcNAc)-beta-1,4-mannose) to generate phosphorylated O-mannosyl trisaccharide (N-acetylgalactosamine-beta-1,3-N-acetylglucosamine-beta-1,4-(phosphate-6-)mannose). Phosphorylated O-mannosyl trisaccharide is a carbohydrate structure present in alpha-dystroglycan (dag1), which is required for binding laminin G-like domain-containing extracellular proteins with high affinity. Only shows kinase activity when the GalNAc-beta-3-GlcNAc-beta-terminus is linked to the 4-position of O-mannose, suggesting that this disaccharide serves as the substrate recognition motif. This chain is Protein O-mannose kinase (pomk), found in Danio rerio (Zebrafish).